Reading from the N-terminus, the 261-residue chain is Cytochrome c oxidase subunit 3 (261 aa).

The Mitochondrial matrix segment spans residues 1-15 (MTHQTHAYHMVNPSP). Residues 16–34 (WPLTGALSALLMTSGLIMW) form a helical membrane-spanning segment. Residues 35–40 (FHFNSM) lie on the Mitochondrial intermembrane side of the membrane. Residues 41–66 (YLLMLGLTTNTLTMYQWWRDIVREST) traverse the membrane as a helical segment. Residues 67-72 (FQGHHT) are Mitochondrial matrix-facing. A helical membrane pass occupies residues 73–105 (PIVQKGLRYGMILFIVSEVFFFAGFFWAFYHSS). The Mitochondrial intermembrane portion of the chain corresponds to 106-128 (LAPTPELGGCWPPTGITPLNPME). A helical membrane pass occupies residues 129–152 (VPLLNTSVLLASGVSITWAHHSLM). At 153 to 155 (EGN) the chain is on the mitochondrial matrix side. A helical transmembrane segment spans residues 156–183 (RKHMLQALFITISLGVYFTLLQASEYYE). Over 184-190 (TPFTISD) the chain is Mitochondrial intermembrane. Residues 191–223 (GIYGSTFFMATGFHGLHVIIGSTFLIVCFMRQL) traverse the membrane as a helical segment. Residues 224–232 (KFHFTSNHH) are Mitochondrial matrix-facing. The chain crosses the membrane as a helical span at residues 233 to 256 (FGFEAAAWYWHFVDVVWLFLYVSI). Over 257 to 261 (YWWGS) the chain is Mitochondrial intermembrane.

It belongs to the cytochrome c oxidase subunit 3 family. As to quaternary structure, component of the cytochrome c oxidase (complex IV, CIV), a multisubunit enzyme composed of 14 subunits. The complex is composed of a catalytic core of 3 subunits MT-CO1, MT-CO2 and MT-CO3, encoded in the mitochondrial DNA, and 11 supernumerary subunits COX4I, COX5A, COX5B, COX6A, COX6B, COX6C, COX7A, COX7B, COX7C, COX8 and NDUFA4, which are encoded in the nuclear genome. The complex exists as a monomer or a dimer and forms supercomplexes (SCs) in the inner mitochondrial membrane with NADH-ubiquinone oxidoreductase (complex I, CI) and ubiquinol-cytochrome c oxidoreductase (cytochrome b-c1 complex, complex III, CIII), resulting in different assemblies (supercomplex SCI(1)III(2)IV(1) and megacomplex MCI(2)III(2)IV(2)).

The protein resides in the mitochondrion inner membrane. It carries out the reaction 4 Fe(II)-[cytochrome c] + O2 + 8 H(+)(in) = 4 Fe(III)-[cytochrome c] + 2 H2O + 4 H(+)(out). Component of the cytochrome c oxidase, the last enzyme in the mitochondrial electron transport chain which drives oxidative phosphorylation. The respiratory chain contains 3 multisubunit complexes succinate dehydrogenase (complex II, CII), ubiquinol-cytochrome c oxidoreductase (cytochrome b-c1 complex, complex III, CIII) and cytochrome c oxidase (complex IV, CIV), that cooperate to transfer electrons derived from NADH and succinate to molecular oxygen, creating an electrochemical gradient over the inner membrane that drives transmembrane transport and the ATP synthase. Cytochrome c oxidase is the component of the respiratory chain that catalyzes the reduction of oxygen to water. Electrons originating from reduced cytochrome c in the intermembrane space (IMS) are transferred via the dinuclear copper A center (CU(A)) of subunit 2 and heme A of subunit 1 to the active site in subunit 1, a binuclear center (BNC) formed by heme A3 and copper B (CU(B)). The BNC reduces molecular oxygen to 2 water molecules using 4 electrons from cytochrome c in the IMS and 4 protons from the mitochondrial matrix. The chain is Cytochrome c oxidase subunit 3 (MT-CO3) from Halichoerus grypus (Gray seal).